A 129-amino-acid chain; its full sequence is uncharacterized protein (129 aa).

3 helical membrane passes run 15–35 (IFII…IFVF), 48–68 (IFSF…YYFF), and 107–127 (INIF…NLVC).

It localises to the membrane. This is an uncharacterized protein from Saccharomyces cerevisiae (strain ATCC 204508 / S288c) (Baker's yeast).